The primary structure comprises 229 residues: PKHD-type hydroxylase BRADO4652 (229 aa).

Residues 78 to 180 (QIFPPLFNRY…RVASFFWMQS (103 aa)) form the Fe2OG dioxygenase domain. Residues His-98, Asp-100, and His-161 each coordinate Fe cation. Arg-171 is a binding site for 2-oxoglutarate.

Fe(2+) is required as a cofactor. It depends on L-ascorbate as a cofactor.

The polypeptide is PKHD-type hydroxylase BRADO4652 (Bradyrhizobium sp. (strain ORS 278)).